The chain runs to 277 residues: MDNIVKVNNISFEYITDEAKLKAIDNLSLDVKKGEFVAIIGHNGSGKSTLSKNLNAILMPTEGNILIDDMDTKEEERLWDIRQTAGMVFQNPDNQIVATIVEEDVAFGPENLGIEPKEIRRIVEESLKSVGMYDLRDRQPHLLSGGQKQRVAIAGIIAMRPKCIIFDEATAMLDPSGRKEVMKTIKRLNKEENITVIHITHFMEEAVEADRVVVMEKGKKILEGTPREVFSKIKMLKEIGLDVPCMTELSSLLIEEGINISSDILTVDEMVMELCQL.

Residues 5–242 form the ABC transporter domain; it reads VKVNNISFEY…IKMLKEIGLD (238 aa). 41–48 provides a ligand contact to ATP; sequence GHNGSGKS.

This sequence belongs to the ABC transporter superfamily. Energy-coupling factor EcfA family. Forms a stable energy-coupling factor (ECF) transporter complex composed of 2 membrane-embedded substrate-binding proteins (S component), 2 ATP-binding proteins (A component) and 2 transmembrane proteins (T component).

It localises to the cell membrane. Functionally, ATP-binding (A) component of a common energy-coupling factor (ECF) ABC-transporter complex. Unlike classic ABC transporters this ECF transporter provides the energy necessary to transport a number of different substrates. This Clostridioides difficile (strain 630) (Peptoclostridium difficile) protein is Energy-coupling factor transporter ATP-binding protein EcfA1.